Consider the following 182-residue polypeptide: Adenine phosphoribosyltransferase (182 aa).

This sequence belongs to the purine/pyrimidine phosphoribosyltransferase family. As to quaternary structure, homodimer.

Its subcellular location is the cytoplasm. The catalysed reaction is AMP + diphosphate = 5-phospho-alpha-D-ribose 1-diphosphate + adenine. Its pathway is purine metabolism; AMP biosynthesis via salvage pathway; AMP from adenine: step 1/1. In terms of biological role, catalyzes a salvage reaction resulting in the formation of AMP, that is energically less costly than de novo synthesis. The chain is Adenine phosphoribosyltransferase from Campylobacter jejuni subsp. jejuni serotype O:23/36 (strain 81-176).